Consider the following 559-residue polypeptide: Proton-coupled zinc antiporter SLC30A9, mitochondrial (559 aa).

The segment at 58–96 is disordered; that stretch reads SSDQKEDGGSKGTSAASSPEKSMAGLDPSKPEQKSTFPP. 5 helical membrane passes run 230-250, 305-325, 333-353, 389-409, and 415-435; these read VVIV…LAWV, GVGI…IGLL, LLWA…TLLV, AAAV…SLTG, and SLGS…LIYT. An LXXLL motif motif is present at residues 453 to 457; sequence LTELL.

Belongs to the cation diffusion facilitator (CDF) transporter (TC 2.A.4) family. SLC30A subfamily.

Its subcellular location is the mitochondrion membrane. The protein resides in the nucleus. It is found in the endoplasmic reticulum. It carries out the reaction Zn(2+)(in) + 2 H(+)(out) = Zn(2+)(out) + 2 H(+)(in). In terms of biological role, mitochondrial proton-coupled zinc ion antiporter mediating the export of zinc from the mitochondria and involved in zinc homeostasis, zinc mobilization as well as mitochondrial morphology and health. In nucleus, may function as a secondary coactivator for nuclear receptors. The sequence is that of Proton-coupled zinc antiporter SLC30A9, mitochondrial (slc30a9) from Xenopus laevis (African clawed frog).